The primary structure comprises 739 residues: Phosphoribosylformylglycinamidine synthase subunit PurL (739 aa).

H54 is an active-site residue. ATP-binding residues include Y57 and K96. E98 lines the Mg(2+) pocket. Residues 99–102 and R121 contribute to the substrate site; that span reads SHNH. H100 functions as the Proton acceptor in the catalytic mechanism. D122 lines the Mg(2+) pocket. Position 245 (Q245) interacts with substrate. Mg(2+) is bound at residue D273. Residue 317–319 participates in substrate binding; sequence ESQ. Residues D500 and G537 each contribute to the ATP site. Residue N538 participates in Mg(2+) binding. S540 contributes to the substrate binding site.

It belongs to the FGAMS family. Monomer. Part of the FGAM synthase complex composed of 1 PurL, 1 PurQ and 2 PurS subunits.

The protein resides in the cytoplasm. It carries out the reaction N(2)-formyl-N(1)-(5-phospho-beta-D-ribosyl)glycinamide + L-glutamine + ATP + H2O = 2-formamido-N(1)-(5-O-phospho-beta-D-ribosyl)acetamidine + L-glutamate + ADP + phosphate + H(+). The protein operates within purine metabolism; IMP biosynthesis via de novo pathway; 5-amino-1-(5-phospho-D-ribosyl)imidazole from N(2)-formyl-N(1)-(5-phospho-D-ribosyl)glycinamide: step 1/2. Its function is as follows. Part of the phosphoribosylformylglycinamidine synthase complex involved in the purines biosynthetic pathway. Catalyzes the ATP-dependent conversion of formylglycinamide ribonucleotide (FGAR) and glutamine to yield formylglycinamidine ribonucleotide (FGAM) and glutamate. The FGAM synthase complex is composed of three subunits. PurQ produces an ammonia molecule by converting glutamine to glutamate. PurL transfers the ammonia molecule to FGAR to form FGAM in an ATP-dependent manner. PurS interacts with PurQ and PurL and is thought to assist in the transfer of the ammonia molecule from PurQ to PurL. In Bacillus cereus (strain ATCC 14579 / DSM 31 / CCUG 7414 / JCM 2152 / NBRC 15305 / NCIMB 9373 / NCTC 2599 / NRRL B-3711), this protein is Phosphoribosylformylglycinamidine synthase subunit PurL.